We begin with the raw amino-acid sequence, 162 residues long: 18.5 kDa class IV heat shock protein (162 aa).

The sHSP domain occupies threonine 53–asparagine 149.

The protein belongs to the small heat shock protein (HSP20) family. May form oligomeric structures.

The protein resides in the cytoplasm. The protein is 18.5 kDa class IV heat shock protein (HSP18.5) of Arabidopsis thaliana (Mouse-ear cress).